Here is a 302-residue protein sequence, read N- to C-terminus: Urease accessory protein UreG (302 aa).

3 stretches are compositionally biased toward basic and acidic residues: residues 1–32, 40–56, and 64–76; these read MHDP…DHVH, HEHE…EHGH, and HAHE…THEH. A disordered region spans residues 1-76; the sequence is MHDPGEHGHG…EHAHGHTHEH (76 aa). 105–112 is a binding site for GTP; it reads GPVGSGKT.

The protein belongs to the SIMIBI class G3E GTPase family. UreG subfamily. Homodimer. UreD, UreF and UreG form a complex that acts as a GTP-hydrolysis-dependent molecular chaperone, activating the urease apoprotein by helping to assemble the nickel containing metallocenter of UreC. The UreE protein probably delivers the nickel.

Its subcellular location is the cytoplasm. In terms of biological role, facilitates the functional incorporation of the urease nickel metallocenter. This process requires GTP hydrolysis, probably effectuated by UreG. In Sorangium cellulosum (strain So ce56) (Polyangium cellulosum (strain So ce56)), this protein is Urease accessory protein UreG.